An 84-amino-acid polypeptide reads, in one-letter code: Beta-mammal Tt1g (84 aa).

The first 20 residues, 1–20 (MKGMILFISCILLIGIVVEC), serve as a signal peptide directing secretion. One can recognise an LCN-type CS-alpha/beta domain in the interval 21–82 (KEGYLMDHEG…VWERATNRCG (62 aa)). Cystine bridges form between cysteine 31-cysteine 81, cysteine 35-cysteine 57, cysteine 43-cysteine 62, and cysteine 47-cysteine 64. At cysteine 81 the chain carries Cysteine amide.

It belongs to the long (4 C-C) scorpion toxin superfamily. Sodium channel inhibitor family. Beta subfamily. In terms of tissue distribution, expressed by the venom gland.

The protein resides in the secreted. Functionally, beta toxins modify sodium channel function in two ways: an excitatory effect (shifting the activation process to more negative potential) and/or a depressant effect (reducing the peak current). At concentration of 500 nM this toxin produces channel opening at more negative potentials in hNav1.2/SCN2A and hNav1.3/SCN3A, which shows the biggest effect. On the other hand the peak current is decreased in hNav1.4/SCN4A and hNav1.5/SCN5A channels, without apparent modification of the activation gate. This toxin is active against mammals. This chain is Beta-mammal Tt1g, found in Tityus trivittatus (Argentinean scorpion).